The primary structure comprises 761 residues: Subtilisin-like protease SBT3.15 (761 aa).

An N-terminal signal peptide occupies residues 1-21 (MENSFLSSKLVFLLAIALVLF). A propeptide spans 22–120 (LNTELSFLTA…VIPNRILKLK (99 aa)) (activation peptide). Residues 41-119 (VYIVYLGQRE…HVIPNRILKL (79 aa)) form the Inhibitor I9 domain. A Peptidase S8 domain is found at 134-613 (PTSFSSSSSA…GGLVNPEKAA (480 aa)). An N-linked (GlcNAc...) asparagine glycan is attached at Asn151. The active-site Charge relay system is Asp164. N-linked (GlcNAc...) asparagine glycosylation is present at Asn197. Catalysis depends on His241, which acts as the Charge relay system. 2 N-linked (GlcNAc...) asparagine glycosylation sites follow: Asn256 and Asn384. The active-site Charge relay system is the Ser544. N-linked (GlcNAc...) asparagine glycosylation is present at Asn636.

The protein belongs to the peptidase S8 family.

The protein localises to the secreted. This Arabidopsis thaliana (Mouse-ear cress) protein is Subtilisin-like protease SBT3.15.